A 149-amino-acid polypeptide reads, in one-letter code: Arginine repressor (149 aa).

Belongs to the ArgR family.

Its subcellular location is the cytoplasm. It participates in amino-acid biosynthesis; L-arginine biosynthesis [regulation]. Regulates arginine biosynthesis genes. The sequence is that of Arginine repressor from Oceanobacillus iheyensis (strain DSM 14371 / CIP 107618 / JCM 11309 / KCTC 3954 / HTE831).